The primary structure comprises 152 residues: Ribonuclease HI (152 aa).

One can recognise an RNase H type-1 domain in the interval 1 to 142; it reads MDSKVVIYTD…ADKLAVQGRE (142 aa). Residues D10, E48, D70, and D134 each coordinate Mg(2+).

This sequence belongs to the RNase H family. In terms of assembly, monomer. Mg(2+) is required as a cofactor.

Its subcellular location is the cytoplasm. The enzyme catalyses Endonucleolytic cleavage to 5'-phosphomonoester.. Functionally, endonuclease that specifically degrades the RNA of RNA-DNA hybrids. This is Ribonuclease HI (rnhA) from Rickettsia prowazekii (strain Madrid E).